The primary structure comprises 604 residues: NADH-ubiquinone oxidoreductase chain 5 (604 aa).

A run of 16 helical transmembrane segments spans residues 2–22 (FSSL…LSIF), 41–61 (AFIT…ETII), 85–105 (MIFV…SLWY), 115–135 (FFKY…ANNL), 138–158 (LFIG…WWYG), 169–189 (AILY…WFLF), 209–231 (LPLL…HPWL), 239–259 (TPVS…FLLI), 271–291 (IQSL…ICAL), 299–318 (IIAF…IGIN), 323–345 (AFLH…GSII), 364–384 (MPFT…IPFL), 411–431 (LIAT…ALLG), 455–475 (LLIG…PTTV), 486–506 (LTAL…SLMT), and 582–602 (IKLY…LFNL).

This sequence belongs to the complex I subunit 5 family. Core subunit of respiratory chain NADH dehydrogenase (Complex I) which is composed of 45 different subunits.

It localises to the mitochondrion inner membrane. It carries out the reaction a ubiquinone + NADH + 5 H(+)(in) = a ubiquinol + NAD(+) + 4 H(+)(out). In terms of biological role, core subunit of the mitochondrial membrane respiratory chain NADH dehydrogenase (Complex I) which catalyzes electron transfer from NADH through the respiratory chain, using ubiquinone as an electron acceptor. Essential for the catalytic activity and assembly of complex I. This Equus caballus (Horse) protein is NADH-ubiquinone oxidoreductase chain 5 (MT-ND5).